Here is a 681-residue protein sequence, read N- to C-terminus: Minichromosome maintenance domain-containing protein 2 (681 aa).

S292 carries the phosphoserine modification. The 89-residue stretch at 533-621 folds into the MCM domain; sequence RQFTTEDFEK…LIAALLFETS (89 aa).

Its function is as follows. Plays an important role in meiotic recombination and associated DNA double-strand break repair. The sequence is that of Minichromosome maintenance domain-containing protein 2 (MCMDC2) from Homo sapiens (Human).